A 177-amino-acid chain; its full sequence is MVRAWYMDDSDADQRAPHMTDPPQPVELDQLKNIGVLYWQLSGNEDDETLAGIRKDRGYSYNDLIEITPEKLPNYEQKIKTFFEEHLHLDEEIRYCVGGSGYFDVRDKGDKWIRIEMEKGDLIVLPAGIYHRFTLDEKNYIKAMRLFVGEPVWTPYNRPADDKDARKEYLKTMGLAA.

Positions 1–23 are disordered; sequence MVRAWYMDDSDADQRAPHMTDPP. 4 residues coordinate Fe(2+): His-86, His-88, Glu-92, and His-131. Ni(2+) contacts are provided by His-86, His-88, Glu-92, and His-131.

The protein belongs to the acireductone dioxygenase (ARD) family. It depends on Fe(2+) as a cofactor. Ni(2+) serves as cofactor.

It localises to the cytoplasm. The protein localises to the nucleus. The catalysed reaction is 1,2-dihydroxy-5-(methylsulfanyl)pent-1-en-3-one + O2 = 4-methylsulfanyl-2-oxobutanoate + formate + 2 H(+). The enzyme catalyses 1,2-dihydroxy-5-(methylsulfanyl)pent-1-en-3-one + O2 = 3-(methylsulfanyl)propanoate + CO + formate + 2 H(+). Its pathway is amino-acid biosynthesis; L-methionine biosynthesis via salvage pathway; L-methionine from S-methyl-5-thio-alpha-D-ribose 1-phosphate: step 5/6. In terms of biological role, catalyzes 2 different reactions between oxygen and the acireductone 1,2-dihydroxy-3-keto-5-methylthiopentene (DHK-MTPene) depending upon the metal bound in the active site. Fe-containing acireductone dioxygenase (Fe-ARD) produces formate and 2-keto-4-methylthiobutyrate (KMTB), the alpha-ketoacid precursor of methionine in the methionine recycle pathway. Ni-containing acireductone dioxygenase (Ni-ARD) produces methylthiopropionate, carbon monoxide and formate, and does not lie on the methionine recycle pathway. This chain is Acireductone dioxygenase, found in Branchiostoma floridae (Florida lancelet).